Reading from the N-terminus, the 218-residue chain is Pyridoxine/pyridoxamine 5'-phosphate oxidase (218 aa).

Substrate is bound by residues 14–17 (RREY) and K72. FMN contacts are provided by residues 67 to 72 (RIVLLK), 82 to 83 (YT), R88, K89, and Q111. Y129, R133, and S137 together coordinate substrate. Residues 146–147 (QS) and W191 each bind FMN. 197–199 (RLH) contributes to the substrate binding site. FMN is bound at residue R201.

It belongs to the pyridoxamine 5'-phosphate oxidase family. Homodimer. The cofactor is FMN.

It carries out the reaction pyridoxamine 5'-phosphate + O2 + H2O = pyridoxal 5'-phosphate + H2O2 + NH4(+). The enzyme catalyses pyridoxine 5'-phosphate + O2 = pyridoxal 5'-phosphate + H2O2. Its pathway is cofactor metabolism; pyridoxal 5'-phosphate salvage; pyridoxal 5'-phosphate from pyridoxamine 5'-phosphate: step 1/1. It functions in the pathway cofactor metabolism; pyridoxal 5'-phosphate salvage; pyridoxal 5'-phosphate from pyridoxine 5'-phosphate: step 1/1. Catalyzes the oxidation of either pyridoxine 5'-phosphate (PNP) or pyridoxamine 5'-phosphate (PMP) into pyridoxal 5'-phosphate (PLP). This is Pyridoxine/pyridoxamine 5'-phosphate oxidase from Klebsiella pneumoniae subsp. pneumoniae (strain ATCC 700721 / MGH 78578).